Consider the following 458-residue polypeptide: MKKKYFGTDGIRGKVGEFPITPEFFLRLGYAVGKVLLASDWKLAADKRPTILIGKDTRISGYMLESALEAGFSAAGVDVLLSGPLPTPAVAYLVRALRIQAGAVISASHNPFYDNGIKFFSSEGSKLPDSMELQIEAELDFPIETAPSIKLGRVQRLKDEEGRYIEFCKSTFPNQLDLRGWKIVVDCANGADYQVAGHVMHELGADVVTIHANPDGFNINHECGATHIMTLQGAVLQHGADFGIAVDGDGDRVLMVSGEGVVYDGDSLAYIIAKHRQQRGVLQGGVVGTLMTNLAVEQAFERIGIPFARANVGDRYVSELLQQNDWYLGAENSGHIICRDKHTTGDGIISALQVLYALRDTGLMFADLMHDVTFFPQRLINVKISRDFDFQNDQAVEICKNEAEQALGNDGRILLRASGTEPLIRVMVEGKDPQQIEYWAEKIAGTIQQQAVASTVGH.

Ser-108 (phosphoserine intermediate) is an active-site residue. Ser-108, Asp-247, Asp-249, and Asp-251 together coordinate Mg(2+). At Ser-108 the chain carries Phosphoserine.

It belongs to the phosphohexose mutase family. It depends on Mg(2+) as a cofactor. In terms of processing, activated by phosphorylation.

It catalyses the reaction alpha-D-glucosamine 1-phosphate = D-glucosamine 6-phosphate. In terms of biological role, catalyzes the conversion of glucosamine-6-phosphate to glucosamine-1-phosphate. The sequence is that of Phosphoglucosamine mutase from Nitrosomonas eutropha (strain DSM 101675 / C91 / Nm57).